The following is a 244-amino-acid chain: Uracil phosphoribosyltransferase (244 aa).

GTP-binding positions include K59, R68, and 102–105; that span reads YSKI. R112 serves as a coordination point for 5-phospho-alpha-D-ribose 1-diphosphate. A GTP-binding site is contributed by R129. Residue R137 participates in 5-phospho-alpha-D-ribose 1-diphosphate binding. R158 serves as a coordination point for GTP. 5-phospho-alpha-D-ribose 1-diphosphate contacts are provided by residues D164 and 164–172; that span reads DPMCATAGS. Residues I229 and 234–236 contribute to the uracil site; that span reads GDF. D235 provides a ligand contact to 5-phospho-alpha-D-ribose 1-diphosphate.

It belongs to the UPRTase family. As to quaternary structure, monomer. Forms homodimers in presence of substrates and homotetramers in the presence of GTP. Mg(2+) serves as cofactor.

It carries out the reaction UMP + diphosphate = 5-phospho-alpha-D-ribose 1-diphosphate + uracil. The protein operates within pyrimidine metabolism; UMP biosynthesis via salvage pathway; UMP from uracil: step 1/1. With respect to regulation, allosterically activated by GTP. Binding of GTP leads to 5-time activation of the enzyme. Catalyzes the conversion of uracil and 5-phospho-alpha-D-ribose 1-diphosphate (PRPP) to UMP and diphosphate. In Toxoplasma gondii, this protein is Uracil phosphoribosyltransferase (uprt).